We begin with the raw amino-acid sequence, 422 residues long: Enolase (422 aa).

Position 162 (Gln-162) interacts with (2R)-2-phosphoglycerate. Glu-204 (proton donor) is an active-site residue. The Mg(2+) site is built by Asp-241, Glu-284, and Asp-311. Residues Lys-336, Arg-365, Ser-366, and Lys-387 each coordinate (2R)-2-phosphoglycerate. Lys-336 (proton acceptor) is an active-site residue.

Belongs to the enolase family. Component of the RNA degradosome, a multiprotein complex involved in RNA processing and mRNA degradation. The cofactor is Mg(2+).

It localises to the cytoplasm. The protein localises to the secreted. The protein resides in the cell surface. It carries out the reaction (2R)-2-phosphoglycerate = phosphoenolpyruvate + H2O. It participates in carbohydrate degradation; glycolysis; pyruvate from D-glyceraldehyde 3-phosphate: step 4/5. Its function is as follows. Catalyzes the reversible conversion of 2-phosphoglycerate (2-PG) into phosphoenolpyruvate (PEP). It is essential for the degradation of carbohydrates via glycolysis. The sequence is that of Enolase from Legionella pneumophila (strain Lens).